The primary structure comprises 192 residues: 3-hydroxyanthranilate 3,4-dioxygenase (192 aa).

Residue arginine 50 coordinates O2. 3 residues coordinate Fe cation: histidine 54, glutamate 60, and histidine 102. A substrate-binding site is contributed by glutamate 60. The substrate site is built by arginine 106 and glutamate 116. A divalent metal cation-binding residues include cysteine 131, cysteine 134, cysteine 168, and cysteine 171.

The protein belongs to the 3-HAO family. Fe(2+) is required as a cofactor.

Its subcellular location is the cytoplasm. It catalyses the reaction 3-hydroxyanthranilate + O2 = (2Z,4Z)-2-amino-3-carboxymuconate 6-semialdehyde. It functions in the pathway cofactor biosynthesis; NAD(+) biosynthesis; quinolinate from L-kynurenine: step 3/3. Catalyzes the oxidative ring opening of 3-hydroxyanthranilate to 2-amino-3-carboxymuconate semialdehyde, which spontaneously cyclizes to quinolinate. In Neosartorya fischeri (strain ATCC 1020 / DSM 3700 / CBS 544.65 / FGSC A1164 / JCM 1740 / NRRL 181 / WB 181) (Aspergillus fischerianus), this protein is 3-hydroxyanthranilate 3,4-dioxygenase (bna1).